The primary structure comprises 119 residues: Protein TusC (119 aa).

This sequence belongs to the DsrF/TusC family. Heterohexamer, formed by a dimer of trimers. The hexameric TusBCD complex contains 2 copies each of TusB, TusC and TusD. The TusBCD complex interacts with TusE.

The protein localises to the cytoplasm. Its function is as follows. Part of a sulfur-relay system required for 2-thiolation of 5-methylaminomethyl-2-thiouridine (mnm(5)s(2)U) at tRNA wobble positions. In Pectobacterium carotovorum subsp. carotovorum (strain PC1), this protein is Protein TusC.